A 461-amino-acid chain; its full sequence is Ufm1-specific protease 2 (461 aa).

Residues C294, D418, and H420 contribute to the active site.

It belongs to the peptidase C78 family. Expressed at high level in brain, kidney, stomach, skeletal muscle, liver, pancreas, spleen and testis.

It localises to the endoplasmic reticulum. The protein localises to the cytoplasm. Its subcellular location is the nucleus. Its function is as follows. Thiol-dependent isopeptidase that specifically cleaves UFM1, a ubiquitin-like modifier protein, from conjugated proteins, such as CD274/PD-L1, CYB5R3, DDRGK1, MRE11, RPL26/uL24, TRIP4 and RPL26/uL24. While it is also able to mediate the processing of UFM1 precursors, a prerequisite for conjugation reactions, UFSP2 mainly acts as a protein deUFMylase that mediates deconjugation of UFM1 from target proteins. Mediates deUFMylation of RPL26/uL24, a critical step to release the UFM1 ribosome E3 ligase (UREL) complex during the recycling of 60S ribosome subunits from the endoplasmic reticulum. Catalyzes deUFMylation of TRIP4, regulating intracellular nuclear receptors transactivation and thereby regulate cell proliferation and differentiation. The sequence is that of Ufm1-specific protease 2 from Mus musculus (Mouse).